An 896-amino-acid chain; its full sequence is Protein translocase subunit SecA (896 aa).

ATP-binding positions include Gln87, 105-109 (GEGKT), and Asp507. The interval 853–879 (ESLSENDEASETQTFRRQEKKIGRNDP) is disordered. Positions 866–876 (TFRRQEKKIGR) are enriched in basic and acidic residues. Residues Cys880, Cys882, Cys891, and His892 each coordinate Zn(2+).

This sequence belongs to the SecA family. In terms of assembly, monomer and homodimer. Part of the essential Sec protein translocation apparatus which comprises SecA, SecYEG and auxiliary proteins SecDF-YajC and YidC. Zn(2+) serves as cofactor.

It is found in the cell inner membrane. The protein localises to the cytoplasm. The enzyme catalyses ATP + H2O + cellular proteinSide 1 = ADP + phosphate + cellular proteinSide 2.. Functionally, part of the Sec protein translocase complex. Interacts with the SecYEG preprotein conducting channel. Has a central role in coupling the hydrolysis of ATP to the transfer of proteins into and across the cell membrane, serving both as a receptor for the preprotein-SecB complex and as an ATP-driven molecular motor driving the stepwise translocation of polypeptide chains across the membrane. This Legionella pneumophila (strain Corby) protein is Protein translocase subunit SecA.